The chain runs to 309 residues: Tagatose-6-phosphate kinase (309 aa).

It belongs to the carbohydrate kinase PfkB family. LacC subfamily.

The enzyme catalyses D-tagatofuranose 6-phosphate + ATP = D-tagatofuranose 1,6-bisphosphate + ADP + H(+). The protein operates within carbohydrate metabolism; D-tagatose 6-phosphate degradation; D-glyceraldehyde 3-phosphate and glycerone phosphate from D-tagatose 6-phosphate: step 1/2. The polypeptide is Tagatose-6-phosphate kinase (Streptococcus pneumoniae (strain 70585)).